Consider the following 695-residue polypeptide: Polyribonucleotide nucleotidyltransferase (695 aa).

Aspartate 486 and aspartate 492 together coordinate Mg(2+). A KH domain is found at 553–612 (PRIETMQINTSKIATVIGPGGKQIRQIIERSGAQVDINDDGVINIAASTQESINKAKELI). The 69-residue stretch at 622 to 690 (GKVYNGRVTS…EKGQLKLSHK (69 aa)) folds into the S1 motif domain.

It belongs to the polyribonucleotide nucleotidyltransferase family. Requires Mg(2+) as cofactor.

It is found in the cytoplasm. The enzyme catalyses RNA(n+1) + phosphate = RNA(n) + a ribonucleoside 5'-diphosphate. In terms of biological role, involved in mRNA degradation. Catalyzes the phosphorolysis of single-stranded polyribonucleotides processively in the 3'- to 5'-direction. This is Polyribonucleotide nucleotidyltransferase from Chlamydia trachomatis serovar D (strain ATCC VR-885 / DSM 19411 / UW-3/Cx).